The chain runs to 341 residues: Holliday junction branch migration complex subunit RuvB (341 aa).

The large ATPase domain (RuvB-L) stretch occupies residues 1 to 180 (MAKSHTLNPE…FGIQLRLDYY (180 aa)). 9 residues coordinate ATP: Leu19, Arg20, Gly61, Lys64, Thr65, Thr66, Arg170, Tyr180, and Arg217. Thr65 is a Mg(2+) binding site. The segment at 181–251 (NDEEMKEIVL…LCLKAFEKMG (71 aa)) is small ATPAse domain (RuvB-S). Residues 254-341 (DLGLDGMDRQ…ENHGQDPTLF (88 aa)) are head domain (RuvB-H). Residues Arg309 and Arg314 each coordinate DNA.

This sequence belongs to the RuvB family. In terms of assembly, homohexamer. Forms an RuvA(8)-RuvB(12)-Holliday junction (HJ) complex. HJ DNA is sandwiched between 2 RuvA tetramers; dsDNA enters through RuvA and exits via RuvB. An RuvB hexamer assembles on each DNA strand where it exits the tetramer. Each RuvB hexamer is contacted by two RuvA subunits (via domain III) on 2 adjacent RuvB subunits; this complex drives branch migration. In the full resolvosome a probable DNA-RuvA(4)-RuvB(12)-RuvC(2) complex forms which resolves the HJ.

The protein resides in the cytoplasm. The catalysed reaction is ATP + H2O = ADP + phosphate + H(+). In terms of biological role, the RuvA-RuvB-RuvC complex processes Holliday junction (HJ) DNA during genetic recombination and DNA repair, while the RuvA-RuvB complex plays an important role in the rescue of blocked DNA replication forks via replication fork reversal (RFR). RuvA specifically binds to HJ cruciform DNA, conferring on it an open structure. The RuvB hexamer acts as an ATP-dependent pump, pulling dsDNA into and through the RuvAB complex. RuvB forms 2 homohexamers on either side of HJ DNA bound by 1 or 2 RuvA tetramers; 4 subunits per hexamer contact DNA at a time. Coordinated motions by a converter formed by DNA-disengaged RuvB subunits stimulates ATP hydrolysis and nucleotide exchange. Immobilization of the converter enables RuvB to convert the ATP-contained energy into a lever motion, pulling 2 nucleotides of DNA out of the RuvA tetramer per ATP hydrolyzed, thus driving DNA branch migration. The RuvB motors rotate together with the DNA substrate, which together with the progressing nucleotide cycle form the mechanistic basis for DNA recombination by continuous HJ branch migration. Branch migration allows RuvC to scan DNA until it finds its consensus sequence, where it cleaves and resolves cruciform DNA. This chain is Holliday junction branch migration complex subunit RuvB, found in Leptospira borgpetersenii serovar Hardjo-bovis (strain JB197).